The primary structure comprises 389 residues: (2R)-sulfolactate sulfo-lyase subunit beta (389 aa).

Belongs to the UxaA family. In terms of assembly, (2R)-sulfolactate sulfo-lyase is composed of a SuyA and a SuyB subunit.

It localises to the cytoplasm. It carries out the reaction (2R)-3-sulfolactate = sulfite + pyruvate + H(+). In terms of biological role, together with SuyA, desulfonates sulfolactate to pyruvate and sulfite. The chain is (2R)-sulfolactate sulfo-lyase subunit beta (suyB) from Chromohalobacter salexigens (strain ATCC BAA-138 / DSM 3043 / CIP 106854 / NCIMB 13768 / 1H11).